We begin with the raw amino-acid sequence, 79 residues long: Protein SNA2 (79 aa).

Over 1 to 6 (MHARDW) the chain is Cytoplasmic. A helical membrane pass occupies residues 7–27 (FLVFIAIFIPPLAVWLKRGFF). At 28–32 (TKDLL) the chain is on the vesicular side. Residues 33–53 (INFLLFLLGFFPGLIHALYVI) traverse the membrane as a helical segment. The Cytoplasmic segment spans residues 54-79 (SCHPYEENEARYSHLSSSDDNYGSLA). 2 positions are modified to phosphoserine: S71 and S77.

The protein belongs to the UPF0057 (PMP3) family.

The protein resides in the membrane. Its subcellular location is the lipid droplet. This Saccharomyces cerevisiae (strain ATCC 204508 / S288c) (Baker's yeast) protein is Protein SNA2 (SNA2).